The primary structure comprises 147 residues: Transcriptional regulator MraZ (147 aa).

2 consecutive SpoVT-AbrB domains span residues Asn6–Glu48 and Thr77–Lys120.

The protein belongs to the MraZ family. Forms oligomers.

The protein localises to the cytoplasm. Its subcellular location is the nucleoid. This Mycoplasmopsis pulmonis (strain UAB CTIP) (Mycoplasma pulmonis) protein is Transcriptional regulator MraZ.